Here is a 226-residue protein sequence, read N- to C-terminus: RNA pyrophosphohydrolase (226 aa).

The region spanning 6-149 is the Nudix hydrolase domain; it reads GFRPNVGIIL…KRGVYEMALT (144 aa). The short motif at 38–59 is the Nudix box element; the sequence is GGIDRGETPEQAMFRELHEEVG. The segment at 197 to 226 is disordered; sequence MELPPGASFDPDPRTGDGDPGMPGIHKPAG.

It belongs to the Nudix hydrolase family. RppH subfamily. A divalent metal cation serves as cofactor.

In terms of biological role, accelerates the degradation of transcripts by removing pyrophosphate from the 5'-end of triphosphorylated RNA, leading to a more labile monophosphorylated state that can stimulate subsequent ribonuclease cleavage. The polypeptide is RNA pyrophosphohydrolase (Paracidovorax citrulli (strain AAC00-1) (Acidovorax citrulli)).